Consider the following 443-residue polypeptide: ATP-dependent protease ATPase subunit HslU (443 aa).

ATP contacts are provided by residues Ile19, 61–66, Asp256, Glu321, and Arg393; that span reads GVGKTE.

This sequence belongs to the ClpX chaperone family. HslU subfamily. A double ring-shaped homohexamer of HslV is capped on each side by a ring-shaped HslU homohexamer. The assembly of the HslU/HslV complex is dependent on binding of ATP.

The protein resides in the cytoplasm. Functionally, ATPase subunit of a proteasome-like degradation complex; this subunit has chaperone activity. The binding of ATP and its subsequent hydrolysis by HslU are essential for unfolding of protein substrates subsequently hydrolyzed by HslV. HslU recognizes the N-terminal part of its protein substrates and unfolds these before they are guided to HslV for hydrolysis. This chain is ATP-dependent protease ATPase subunit HslU, found in Ralstonia nicotianae (strain ATCC BAA-1114 / GMI1000) (Ralstonia solanacearum).